The chain runs to 287 residues: Lycopene elongase/hydratase (287 aa).

7 helical membrane passes run 15-35, 37-57, 97-117, 137-157, 166-186, 218-238, and 265-285; these read ISWV…AGEI, WLFW…MYGI, IPFL…WLTI, FIDA…GATI, MWIA…LGAV, LLAA…GIAI, and VFLW…IAIH.

The protein belongs to the UbiA prenyltransferase family.

Its subcellular location is the cell membrane. It carries out the reaction all-trans-lycopene + dimethylallyl diphosphate + A + H2O = nonaflavuxanthin + AH2 + diphosphate. The catalysed reaction is nonaflavuxanthin + dimethylallyl diphosphate + A + H2O = flavuxanthin + AH2 + diphosphate. It functions in the pathway carotenoid biosynthesis. Functionally, catalyzes the elongation of the C(40) carotenoid all-trans-lycopene to the acyclic C(50) carotenoid flavuxanthin during decaprenoxanthin biosynthesis. Acts as a bifunctional enzyme that catalyzes the elongation of lycopene by attaching a C(5) isoprene unit at C-2, as well as the hydroxylation of the new isoprene unit. The enzyme acts at both ends of the substrate, forming the C(50) carotenoid flavuxanthin via the C(45) intermediate nonaflavuxanthin. The sequence is that of Lycopene elongase/hydratase from Corynebacterium glutamicum (Brevibacterium saccharolyticum).